The following is a 132-amino-acid chain: Small ribosomal subunit protein eS12 (132 aa).

Ala-2 is subject to N-acetylalanine. Residue Lys-129 is modified to N6-succinyllysine.

This sequence belongs to the eukaryotic ribosomal protein eS12 family. As to quaternary structure, part of the small subunit (SSU) processome, composed of more than 70 proteins and the RNA chaperone small nucleolar RNA (snoRNA) U3. Subunit of the 40S ribosomal complex.

The protein localises to the nucleus. It is found in the nucleolus. Functionally, part of the small subunit (SSU) processome, first precursor of the small eukaryotic ribosomal subunit. During the assembly of the SSU processome in the nucleolus, many ribosome biogenesis factors, an RNA chaperone and ribosomal proteins associate with the nascent pre-rRNA and work in concert to generate RNA folding, modifications, rearrangements and cleavage as well as targeted degradation of pre-ribosomal RNA by the RNA exosome. Subunit of the 40S ribosomal complex. This chain is Small ribosomal subunit protein eS12 (Rps12), found in Mus musculus (Mouse).